A 640-amino-acid polypeptide reads, in one-letter code: Threonine--tRNA ligase (640 aa).

Positions 1-61 (MPVITLPDGS…SNDATLQIIT (61 aa)) constitute a TGS domain. A catalytic region spans residues 242 to 533 (DHRKIGKQLD…LIEHYAGVFP (292 aa)). Zn(2+)-binding residues include Cys-333, His-384, and His-510.

This sequence belongs to the class-II aminoacyl-tRNA synthetase family. In terms of assembly, homodimer. The cofactor is Zn(2+).

The protein localises to the cytoplasm. The catalysed reaction is tRNA(Thr) + L-threonine + ATP = L-threonyl-tRNA(Thr) + AMP + diphosphate + H(+). Its function is as follows. Catalyzes the attachment of threonine to tRNA(Thr) in a two-step reaction: L-threonine is first activated by ATP to form Thr-AMP and then transferred to the acceptor end of tRNA(Thr). Also edits incorrectly charged L-seryl-tRNA(Thr). The polypeptide is Threonine--tRNA ligase (Pseudomonas putida (strain GB-1)).